A 1487-amino-acid chain; its full sequence is Chromosome partition protein MukB (1487 aa).

An ATP-binding site is contributed by 34-41; sequence GGNGAGKS. Coiled coils occupy residues 297-426, 460-666, 781-806, 836-1111, and 1210-1266; these read SSRE…LEKA, ALKH…RLAS, RAAR…AKAA, EQAL…RTFV, and VEAI…LSNI. Positions 667–784 are flexible hinge; the sequence is PGGSNDPRLK…VIPLFGRAAR (118 aa).

Belongs to the SMC family. MukB subfamily. In terms of assembly, homodimerization via its hinge domain. Binds to DNA via its C-terminal region. Interacts, and probably forms a ternary complex, with MukE and MukF via its C-terminal region. The complex formation is stimulated by calcium or magnesium. Interacts with tubulin-related protein FtsZ.

Its subcellular location is the cytoplasm. It localises to the nucleoid. Plays a central role in chromosome condensation, segregation and cell cycle progression. Functions as a homodimer, which is essential for chromosome partition. Involved in negative DNA supercoiling in vivo, and by this means organize and compact chromosomes. May achieve or facilitate chromosome segregation by condensation DNA from both sides of a centrally located replisome during cell division. The chain is Chromosome partition protein MukB from Vibrio vulnificus (strain CMCP6).